A 1136-amino-acid polypeptide reads, in one-letter code: Mitochondrial 3' processome subunit 3 (1136 aa).

The N-terminal 97 residues, 1–97 (MKKAWAQLER…RGLVCTTVGD (97 aa)), are a transit peptide targeting the mitochondrion.

Component of the mitochondrial 3' processome (MPsome) complex composed at least of terminal uridylyltransferase KRET1/TUT1, 3'-5' exonuclease DSS1, MPSS1, MPSS2 and MPSS3. Within the complex, interacts with KRET1.

Its subcellular location is the mitochondrion. As part of the mitochondrial 3' processome (MPsome), involved in the maturation of guided RNA (gRNA) precursors. This Trypanosoma brucei brucei protein is Mitochondrial 3' processome subunit 3.